The primary structure comprises 232 residues: 2-C-methyl-D-erythritol 4-phosphate cytidylyltransferase (232 aa).

Belongs to the IspD/TarI cytidylyltransferase family. IspD subfamily.

The enzyme catalyses 2-C-methyl-D-erythritol 4-phosphate + CTP + H(+) = 4-CDP-2-C-methyl-D-erythritol + diphosphate. It functions in the pathway isoprenoid biosynthesis; isopentenyl diphosphate biosynthesis via DXP pathway; isopentenyl diphosphate from 1-deoxy-D-xylulose 5-phosphate: step 2/6. In terms of biological role, catalyzes the formation of 4-diphosphocytidyl-2-C-methyl-D-erythritol from CTP and 2-C-methyl-D-erythritol 4-phosphate (MEP). This Synechococcus elongatus (strain ATCC 33912 / PCC 7942 / FACHB-805) (Anacystis nidulans R2) protein is 2-C-methyl-D-erythritol 4-phosphate cytidylyltransferase.